The sequence spans 311 residues: Ciliary microtubule inner protein 2B (311 aa).

Disordered stretches follow at residues 64–93 and 150–183; these read PFPPAPRGHSYNEASQELGGRRRRQRLGDP and QEGRQPQTEHEKQLLTARHRTPLPALSKEPAPFM.

Belongs to the CIMIP2 family. In terms of tissue distribution, expressed in airway epithelial cells.

The protein localises to the cytoplasm. Its subcellular location is the cytoskeleton. It localises to the cilium axoneme. Functionally, microtubule inner protein (MIP) part of the dynein-decorated doublet microtubules (DMTs) in cilia axoneme, which is required for motile cilia beating. The chain is Ciliary microtubule inner protein 2B (cimip2b) from Xenopus laevis (African clawed frog).